The primary structure comprises 318 residues: DNA repair nuclease/redox regulator APEX1 (318 aa).

Positions 1-33 (MPKRGKKGAVAEDGDELKTEPEAKKSKTAAKKN) are necessary for interaction with YBX1, binding to RNA, association together with NPM1 to rRNA, endoribonuclease activity on abasic RNA and localization in the nucleoli. Residues 1–60 (MPKRGKKGAVAEDGDELKTEPEAKKSKTAAKKNDKEAAGEGPALYEDPPDQKTSPSGKPA) form a disordered region. 2 positions are modified to N6-acetyllysine; by EP300: Lys-6 and Lys-7. The Nuclear localization signal (NLS) signature appears at 8–13 (GAVAED). A compositionally biased stretch (basic and acidic residues) spans 16-38 (ELKTEPEAKKSKTAAKKNDKEAA). Residues 23-33 (AKKSKTAAKKN) are necessary for interaction with NPM1 and for efficient rRNA binding. Lys-27, Lys-31, Lys-32, and Lys-35 each carry N6-acetyllysine. Ser-54 bears the Phosphoserine mark. A Nuclear export signal (NES) motif is present at residues 64–80 (ICSWNVDGLRAWIKKKG). Cys-65 carries the S-nitrosocysteine; alternate modification. Cys-65 and Cys-93 are disulfide-bonded. Asp-70 serves as a coordination point for Mg(2+). S-nitrosocysteine; alternate is present on Cys-93. Residue Glu-96 participates in Mg(2+) binding. Tyr-171 is a catalytic residue. Lys-197 carries the N6-acetyllysine modification. Mg(2+) is bound by residues Asp-210 and Asn-212. The active-site Proton donor/acceptor is Asp-210. Position 233 is a phosphothreonine; by CDK5 (Thr-233). The mitochondrial targeting sequence (MTS) stretch occupies residues 289–318 (HSLLPALCDSKIRSKALGSDHCPITLYLAL). Asp-308 lines the Mg(2+) pocket. Cys-310 carries the S-nitrosocysteine modification.

This sequence belongs to the DNA repair enzymes AP/ExoA family. In terms of assembly, monomer. Homodimer; disulfide-linked. Component of the SET complex, composed of at least APEX1, SET, ANP32A, HMGB2, NME1 and TREX1. Associates with the dimer XRCC5/XRCC6 in a DNA-dependent manner. Interacts with SIRT1; the interaction is increased in the context of genotoxic stress. Interacts with HDAC1, HDAC2 and HDAC3; the interactions are not dependent on the APEX1 acetylation status. Interacts with XRCC1; the interaction is induced by SIRT1 and increased with the APEX1 acetylated form. Interacts with NPM1 (via N-terminal domain); the interaction is RNA-dependent and decreases in hydrogen peroxide-damaged cells. Interacts (via N-terminus) with YBX1 (via C-terminus); the interaction is increased in presence of APEX1 acetylated at Lys-6 and Lys-7. Interacts with HNRNPL; the interaction is DNA-dependent. Interacts (via N-terminus) with KPNA1 and KPNA2. Interacts with TXN; the interaction stimulates the FOS/JUN AP-1 complex DNA-binding activity in a redox-dependent manner. Interacts with GZMA, KRT8, MDM2, POLB, PRDX6, PRPF19, RPLP0, TOMM20 and WDR77. Binds to CDK5. The cofactor is Mg(2+). It depends on Mn(2+) as a cofactor. Phosphorylated. Phosphorylation by kinase PKC or casein kinase CK2 results in enhanced redox activity that stimulates binding of the FOS/JUN AP-1 complex to its cognate binding site. AP-endodeoxyribonuclease activity is not affected by CK2-mediated phosphorylation. Phosphorylation of Thr-233 by CDK5 in response to MPP(+)/MPTP (1-methyl-4-phenylpyridinium) reduces AP-endodeoxyribonuclease activity resulting in accumulation of DNA damage and contributing to neuronal death. In terms of processing, acetylated on Lys-6 and Lys-7. Acetylation is increased by the transcriptional coactivator EP300 acetyltransferase, genotoxic agents like H(2)O(2) and methyl methanesulfonate (MMS). Acetylation increases its binding affinity to the negative calcium response element (nCaRE) DNA promoter. The acetylated form induces a stronger binding of YBX1 to the Y-box sequence in the MDR1 promoter than the unacetylated form. Deacetylated on lysines. Lys-6 and Lys-7 are deacetylated by SIRT1. Post-translationally, cleaved at Lys-31 by granzyme A to create the mitochondrial form; leading in reduction of binding to DNA, AP endodeoxyribonuclease activity, redox activation of transcription factors and to enhanced cell death. Cleaved by granzyme K; leading to intracellular ROS accumulation and enhanced cell death after oxidative stress. Cys-69 and Cys-93 are nitrosylated in response to nitric oxide (NO) and lead to the exposure of the nuclear export signal (NES). In terms of processing, ubiquitinated by MDM2; leading to translocation to the cytoplasm and proteasomal degradation.

The protein resides in the nucleus. The protein localises to the nucleolus. Its subcellular location is the nucleus speckle. It localises to the endoplasmic reticulum. It is found in the cytoplasm. The protein resides in the mitochondrion. The enzyme catalyses Exonucleolytic cleavage in the 3'- to 5'-direction to yield nucleoside 5'-phosphates.. With respect to regulation, NPM1 stimulates endodeoxyribonuclease activity on double-stranded DNA with AP sites, but inhibits endoribonuclease activity on single-stranded RNA containing AP sites. In terms of biological role, multifunctional protein that plays a central role in the cellular response to oxidative stress. The two major activities of APEX1 are DNA repair and redox regulation of transcriptional factors. Functions as an apurinic/apyrimidinic (AP) endodeoxyribonuclease in the DNA base excision repair (BER) pathway of DNA lesions induced by oxidative and alkylating agents. Initiates repair of AP sites in DNA by catalyzing hydrolytic incision of the phosphodiester backbone immediately adjacent to the damage, generating a single-strand break with 5'-deoxyribose phosphate and 3'-hydroxyl ends. Also incises at AP sites in the DNA strand of DNA/RNA hybrids, single-stranded DNA regions of R-loop structures, and single-stranded RNA molecules. Has 3'-5' exoribonuclease activity on mismatched deoxyribonucleotides at the 3' termini of nicked or gapped DNA molecules during short-patch BER. Possesses DNA 3' phosphodiesterase activity capable of removing lesions (such as phosphoglycolate) blocking the 3' side of DNA strand breaks. May also play a role in the epigenetic regulation of gene expression by participating in DNA demethylation. Acts as a loading factor for POLB onto non-incised AP sites in DNA and stimulates the 5'-terminal deoxyribose 5'-phosphate (dRp) excision activity of POLB. Plays a role in the protection from granzyme-mediated cellular repair leading to cell death. Also involved in the DNA cleavage step of class switch recombination (CSR). On the other hand, APEX1 also exerts reversible nuclear redox activity to regulate DNA binding affinity and transcriptional activity of transcriptional factors by controlling the redox status of their DNA-binding domain, such as the FOS/JUN AP-1 complex after exposure to IR. Involved in calcium-dependent down-regulation of parathyroid hormone (PTH) expression by binding to negative calcium response elements (nCaREs). Together with HNRNPL or the dimer XRCC5/XRCC6, associates with nCaRE, acting as an activator of transcriptional repression. Stimulates the YBX1-mediated MDR1 promoter activity, when acetylated at Lys-6 and Lys-7, leading to drug resistance. Also acts as an endoribonuclease involved in the control of single-stranded RNA metabolism. Plays a role in regulating MYC mRNA turnover by preferentially cleaving in between UA and CA dinucleotides of the MYC coding region determinant (CRD). In association with NMD1, plays a role in the rRNA quality control process during cell cycle progression. Associates, together with YBX1, on the MDR1 promoter. Together with NPM1, associates with rRNA. Binds DNA and RNA. The sequence is that of DNA repair nuclease/redox regulator APEX1 (APEX1) from Gorilla gorilla gorilla (Western lowland gorilla).